We begin with the raw amino-acid sequence, 300 residues long: Protein XRI1 (300 aa).

In terms of assembly, interacts (via C-terminal domain) with MIP1.

Its subcellular location is the nucleus. In terms of biological role, required for mitotic division of the generative cell nucleus and the development of mature tricellular pollen grains, and for male and female meiosis. This chain is Protein XRI1 (XRI1), found in Arabidopsis thaliana (Mouse-ear cress).